Here is a 536-residue protein sequence, read N- to C-terminus: Major facilitator superfamily domain-containing protein 4B (536 aa).

12 helical membrane passes run 19-39 (LTYW…GPTI), 53-73 (ITWV…SGGA), 81-101 (ALLA…IIPL), 105-125 (VLLL…IDTI), 140-160 (IFLQ…PLIA), 211-231 (YAFW…FVLM), 297-317 (FFLI…IMGV), 341-361 (LNCI…PLSY), 366-386 (VHLL…LMIL), 391-411 (VFLF…FPCL), 428-448 (VLVT…GTLI), and 456-476 (FLVC…SVIL).

Belongs to the major facilitator superfamily.

The protein localises to the membrane. This is Major facilitator superfamily domain-containing protein 4B from Danio rerio (Zebrafish).